Here is a 400-residue protein sequence, read N- to C-terminus: NADH-ubiquinone oxidoreductase 49 kDa subunit (400 aa).

Belongs to the complex I 49 kDa subunit family.

It is found in the mitochondrion. It catalyses the reaction a ubiquinone + NADH + 5 H(+)(in) = a ubiquinol + NAD(+) + 4 H(+)(out). Functionally, core subunit of the mitochondrial membrane respiratory chain NADH dehydrogenase (Complex I) that is believed to belong to the minimal assembly required for catalysis. Complex I functions in the transfer of electrons from NADH to the respiratory chain. The immediate electron acceptor for the enzyme is believed to be ubiquinone. Component of the iron-sulfur (IP) fragment of the enzyme. Component of the iron-sulfur (IP) fragment of the enzyme. The sequence is that of NADH-ubiquinone oxidoreductase 49 kDa subunit (NAD7) from Prototheca wickerhamii.